Reading from the N-terminus, the 269-residue chain is Mitochondrial distribution and morphology protein 12 (269 aa).

The 269-residue stretch at 1–269 (MSLEVNWEQI…WPNWIEFQGV (269 aa)) folds into the SMP-LTD domain. Positions 72-119 (ERAGTGEGDEDDGRVAPTSTPMKHQTSGSSDQTDASNPISPSTSHDHE) are disordered. The segment covering 88–114 (PTSTPMKHQTSGSSDQTDASNPISPST) has biased composition (polar residues).

Belongs to the MDM12 family. Component of the ER-mitochondria encounter structure (ERMES) or MDM complex, composed of MMM1, MDM10, MDM12 and MDM34. An MMM1 homodimer associates with one molecule of MDM12 on each side in a pairwise head-to-tail manner, and the SMP-LTD domains of MMM1 and MDM12 generate a continuous hydrophobic tunnel for phospholipid trafficking.

The protein resides in the mitochondrion outer membrane. It is found in the endoplasmic reticulum membrane. Functionally, component of the ERMES/MDM complex, which serves as a molecular tether to connect the endoplasmic reticulum (ER) and mitochondria. Components of this complex are involved in the control of mitochondrial shape and protein biogenesis, and function in nonvesicular lipid trafficking between the ER and mitochondria. MDM12 is required for the interaction of the ER-resident membrane protein MMM1 and the outer mitochondrial membrane-resident beta-barrel protein MDM10. The MDM12-MMM1 subcomplex functions in the major beta-barrel assembly pathway that is responsible for biogenesis of all mitochondrial outer membrane beta-barrel proteins, and acts in a late step after the SAM complex. The MDM10-MDM12-MMM1 subcomplex further acts in the TOM40-specific pathway after the action of the MDM12-MMM1 complex. Essential for establishing and maintaining the structure of mitochondria and maintenance of mtDNA nucleoids. The chain is Mitochondrial distribution and morphology protein 12 from Komagataella phaffii (strain GS115 / ATCC 20864) (Yeast).